Reading from the N-terminus, the 461-residue chain is Propanal dehydrogenase (CoA-propanoylating) (461 aa).

Positions 1–18 (MNTSELETLIRNILSEQL) are targets protein to the BMC.

The protein belongs to the EutE/PduP family. Interacts with PduK, probably with its BMC-containing N-terminus. Interacts with shell proteins PduA and PduJ, interacts with PduQ.

Its subcellular location is the bacterial microcompartment. It catalyses the reaction propanal + NAD(+) + CoA = propanoyl-CoA + NADH + H(+). It participates in polyol metabolism; 1,2-propanediol degradation. Its function is as follows. A CoA-acylating aldehyde dehydrogenase required for optimal 1,2-propanediol (1,2-PD) degradation. Optimizes growth in the bacterial microcompartment (BMC) dedicated to 1,2-PD degradation by minimizing propionaldehyde toxicity. NAD(+) and NADH are regenerated internally within the Pdu BMC by the PduP and PduQ enzymes, which reduce NAD(+) and oxidize NADH respectively, although there must also be cofactor transport across the BMC. Directly targeted to the BMC. In terms of biological role, expression of a cosmid containing the full 21-gene pdu operon in E.coli allows E.coli to grow on 1,2-propanediol (1,2-PD) with the appearance of bacterial microcompartments (BMC) in its cytoplasm. Functionally, the 1,2-PD-specific bacterial microcompartment (BMC) concentrates low levels of 1,2-PD catabolic enzymes, concentrates volatile reaction intermediates thus enhancing pathway flux and keeps the level of toxic, mutagenic propionaldehyde low. This is Propanal dehydrogenase (CoA-propanoylating) from Citrobacter freundii.